The primary structure comprises 276 residues: Transmembrane protein 81 (276 aa).

The signal sequence occupies residues 1–24 (MKTSATSFIPGSLVLAFCLPVVAT). The Extracellular segment spans residues 25–225 (SPKTLAIPEK…QHPPWKKKVA (201 aa)). N-linked (GlcNAc...) asparagine glycosylation occurs at asparagine 45. Residues 83–176 (TNWLCGMLHF…NLRLVKRLYF (94 aa)) form the Ig-like domain. A disulfide bridge links cysteine 104 with cysteine 160. Asparagine 211 carries N-linked (GlcNAc...) asparagine glycosylation. A helical transmembrane segment spans residues 226-246 (IAVGIGVAGGVTGGVLVSIVL). Residues 247 to 276 (CGRLSVIHSSASLETLQALLPKGGMLRKPD) lie on the Cytoplasmic side of the membrane.

Forms a complex with IZUMO1 and SPACA6 on spermatocyte cell membrane required for fertilization.

Its subcellular location is the cell membrane. Its function is as follows. Essential fertilization factor required for male fertility. Part of a conserved trimeric sperm complex with the essential fertilization factors IZUMO1 and SPACA6 which bridges sperm and oocyte membranes during fertilization by binding to IZUMO1R/JUNO on the oocyte. The sequence is that of Transmembrane protein 81 (TMEM81) from Bos taurus (Bovine).